The chain runs to 320 residues: Protein TsetseEP (320 aa).

An N-terminal signal peptide occupies residues 1–19 (MKFFISFAFLCLVLSCVAA). Residues 192–320 (GLPEPEPEPE…ESKPNSLFNF (129 aa)) are disordered. Positions 194–308 (PEPEPEPEPE…EPEPEPEPQP (115 aa)) are enriched in acidic residues. A 59 X 2 AA tandem repeats of P-E region spans residues 194-311 (PEPEPEPEPE…PEPEPQPEPE (118 aa)).

In terms of tissue distribution, expressed in the gut, but not salivary glands, of female and male flies (at protein level). Present in vesicles in midgut cells and in the lumen of the gut.

The protein resides in the secreted. The polypeptide is Protein TsetseEP (Glossina morsitans morsitans (Savannah tsetse fly)).